Reading from the N-terminus, the 239-residue chain is Uridylate kinase (239 aa).

10-13 (KLSG) provides a ligand contact to ATP. Positions 18-23 (GEDGYG) are involved in allosteric activation by GTP. A UMP-binding site is contributed by G52. ATP is bound by residues G53 and R57. Residues D72 and 133-140 (TGNPYFTT) contribute to the UMP site. ATP-binding residues include T160, Y166, and D169.

Belongs to the UMP kinase family. In terms of assembly, homohexamer.

The protein resides in the cytoplasm. It carries out the reaction UMP + ATP = UDP + ADP. It participates in pyrimidine metabolism; CTP biosynthesis via de novo pathway; UDP from UMP (UMPK route): step 1/1. With respect to regulation, allosterically activated by GTP. Inhibited by UTP. Its function is as follows. Catalyzes the reversible phosphorylation of UMP to UDP. This Chlorobium chlorochromatii (strain CaD3) protein is Uridylate kinase.